The following is a 164-amino-acid chain: ATP synthase subunit b 1 (164 aa).

The chain crosses the membrane as a helical span at residues 4–24 (MELAELWVAVAFFVFVGILLY).

This sequence belongs to the ATPase B chain family. F-type ATPases have 2 components, F(1) - the catalytic core - and F(0) - the membrane proton channel. F(1) has five subunits: alpha(3), beta(3), gamma(1), delta(1), epsilon(1). F(0) has three main subunits: a(1), b(2) and c(10-14). The alpha and beta chains form an alternating ring which encloses part of the gamma chain. F(1) is attached to F(0) by a central stalk formed by the gamma and epsilon chains, while a peripheral stalk is formed by the delta and b chains.

Its subcellular location is the cell inner membrane. In terms of biological role, f(1)F(0) ATP synthase produces ATP from ADP in the presence of a proton or sodium gradient. F-type ATPases consist of two structural domains, F(1) containing the extramembraneous catalytic core and F(0) containing the membrane proton channel, linked together by a central stalk and a peripheral stalk. During catalysis, ATP synthesis in the catalytic domain of F(1) is coupled via a rotary mechanism of the central stalk subunits to proton translocation. Its function is as follows. Component of the F(0) channel, it forms part of the peripheral stalk, linking F(1) to F(0). The chain is ATP synthase subunit b 1 from Azorhizobium caulinodans (strain ATCC 43989 / DSM 5975 / JCM 20966 / LMG 6465 / NBRC 14845 / NCIMB 13405 / ORS 571).